We begin with the raw amino-acid sequence, 209 residues long: Transcription factor atf31 (209 aa).

A compositionally biased stretch (polar residues) spans 90–103; that stretch reads SKSPSIISEASHNS. The tract at residues 90-133 is disordered; the sequence is SKSPSIISEASHNSPSRELDDSGDENTSKLTGTKQSMLKARNRQ. The bZIP domain maps to 121-184; it reads GTKQSMLKAR…IKLRTLVFAH (64 aa). A basic motif region spans residues 123-161; sequence KQSMLKARNRQAAQKCRIKKKKYLQTLQDQVNYYTSENK. Residues 163-177 form a leucine-zipper region; that stretch reads LLQSANDLREEIIKL.

It belongs to the bZIP family.

It localises to the nucleus. The polypeptide is Transcription factor atf31 (atf31) (Schizosaccharomyces pombe (strain 972 / ATCC 24843) (Fission yeast)).